A 127-amino-acid polypeptide reads, in one-letter code: Large ribosomal subunit protein bL17 (127 aa).

Belongs to the bacterial ribosomal protein bL17 family. In terms of assembly, part of the 50S ribosomal subunit. Contacts protein L32.

The polypeptide is Large ribosomal subunit protein bL17 (Lactiplantibacillus plantarum (strain ATCC BAA-793 / NCIMB 8826 / WCFS1) (Lactobacillus plantarum)).